Consider the following 272-residue polypeptide: Energy-coupling factor transporter ATP-binding protein EcfA1 (272 aa).

Residues 2-237 (IKVSDVCFSY…KNIIEKAKID (236 aa)) form the ABC transporter domain. 37–44 (GHNGSGKS) serves as a coordination point for ATP.

The protein belongs to the ABC transporter superfamily. Energy-coupling factor EcfA family. In terms of assembly, forms a stable energy-coupling factor (ECF) transporter complex composed of 2 membrane-embedded substrate-binding proteins (S component), 2 ATP-binding proteins (A component) and 2 transmembrane proteins (T component).

It is found in the cell membrane. In terms of biological role, ATP-binding (A) component of a common energy-coupling factor (ECF) ABC-transporter complex. Unlike classic ABC transporters this ECF transporter provides the energy necessary to transport a number of different substrates. The sequence is that of Energy-coupling factor transporter ATP-binding protein EcfA1 from Mesomycoplasma hyopneumoniae (strain J / ATCC 25934 / NCTC 10110) (Mycoplasma hyopneumoniae).